The following is a 314-amino-acid chain: MLMNYSSATEFYLLGFPGSEELHHILFAIFFFFYLVTLMGNTVIIMIVCVDKRLQSPMYFFLGHLSALEILVTTIIVPVMLWGLLLPGMQTIYLSACVVQLFLYLAVGTTEFALLGAMAVDRYVAVCNPLRYNIIMNRHTCNFVVLVSWVFGFLFQIWPVYVMFQLTYCKSNVVNNFFCDRGQLLKLSCNNTLFTEFILFLMAVFVLFGSLIPTIVSNAYIISTILKIPSSSGRRKSFSTCASHFTCVVIGYGSCLFLYVKPKQTQAADYNWVVSLMVSVVTPFLNPFIFTLRNDKVIEALRDGVKRCCQLFRN.

Topologically, residues 1 to 24 (MLMNYSSATEFYLLGFPGSEELHH) are extracellular. Residue Asn-4 is glycosylated (N-linked (GlcNAc...) asparagine). A helical transmembrane segment spans residues 25–45 (ILFAIFFFFYLVTLMGNTVII). Residues 46-53 (MIVCVDKR) are Cytoplasmic-facing. The chain crosses the membrane as a helical span at residues 54 to 74 (LQSPMYFFLGHLSALEILVTT). Topologically, residues 75–99 (IIVPVMLWGLLLPGMQTIYLSACVV) are extracellular. Cysteines 97 and 189 form a disulfide. Residues 100 to 120 (QLFLYLAVGTTEFALLGAMAV) traverse the membrane as a helical segment. Residues 121 to 139 (DRYVAVCNPLRYNIIMNRH) lie on the Cytoplasmic side of the membrane. The chain crosses the membrane as a helical span at residues 140–160 (TCNFVVLVSWVFGFLFQIWPV). The Extracellular portion of the chain corresponds to 161–197 (YVMFQLTYCKSNVVNNFFCDRGQLLKLSCNNTLFTEF). A glycan (N-linked (GlcNAc...) asparagine) is linked at Asn-190. A helical transmembrane segment spans residues 198–217 (ILFLMAVFVLFGSLIPTIVS). At 218–237 (NAYIISTILKIPSSSGRRKS) the chain is on the cytoplasmic side. The chain crosses the membrane as a helical span at residues 238–258 (FSTCASHFTCVVIGYGSCLFL). At 259-271 (YVKPKQTQAADYN) the chain is on the extracellular side. A helical membrane pass occupies residues 272-292 (WVVSLMVSVVTPFLNPFIFTL). The Cytoplasmic portion of the chain corresponds to 293–314 (RNDKVIEALRDGVKRCCQLFRN).

Belongs to the G-protein coupled receptor 1 family.

Its subcellular location is the cell membrane. Functionally, odorant receptor. The protein is Olfactory receptor 9A4 (OR9A4) of Homo sapiens (Human).